The primary structure comprises 106 residues: NADH dehydrogenase [ubiquinone] 1 beta subcomplex subunit 10-B (106 aa).

The interval 1–25 is disordered; that stretch reads MGRKKGLPEFEESAPDGFDPENPYK.

This sequence belongs to the complex I NDUFB10 subunit family. In terms of assembly, complex I is composed of at least 49 different subunits.

It is found in the mitochondrion inner membrane. Its function is as follows. Accessory subunit of the mitochondrial membrane respiratory chain NADH dehydrogenase (Complex I), that is believed not to be involved in catalysis. Complex I functions in the transfer of electrons from NADH to the respiratory chain. The immediate electron acceptor for the enzyme is believed to be ubiquinone. The polypeptide is NADH dehydrogenase [ubiquinone] 1 beta subcomplex subunit 10-B (Arabidopsis thaliana (Mouse-ear cress)).